Reading from the N-terminus, the 622-residue chain is 1-deoxy-D-xylulose-5-phosphate synthase (622 aa).

Thiamine diphosphate is bound by residues His71 and 112-114 (GHS). Asp143 is a Mg(2+) binding site. Thiamine diphosphate-binding positions include 144 to 145 (GA), Asn172, Tyr283, and Glu363. Position 172 (Asn172) interacts with Mg(2+).

This sequence belongs to the transketolase family. DXPS subfamily. In terms of assembly, homodimer. Requires Mg(2+) as cofactor. Thiamine diphosphate is required as a cofactor.

The catalysed reaction is D-glyceraldehyde 3-phosphate + pyruvate + H(+) = 1-deoxy-D-xylulose 5-phosphate + CO2. It participates in metabolic intermediate biosynthesis; 1-deoxy-D-xylulose 5-phosphate biosynthesis; 1-deoxy-D-xylulose 5-phosphate from D-glyceraldehyde 3-phosphate and pyruvate: step 1/1. Functionally, catalyzes the acyloin condensation reaction between C atoms 2 and 3 of pyruvate and glyceraldehyde 3-phosphate to yield 1-deoxy-D-xylulose-5-phosphate (DXP). The polypeptide is 1-deoxy-D-xylulose-5-phosphate synthase (Caldanaerobacter subterraneus subsp. tengcongensis (strain DSM 15242 / JCM 11007 / NBRC 100824 / MB4) (Thermoanaerobacter tengcongensis)).